The sequence spans 109 residues: Phycoerythrin alpha-2 subunit (109 aa).

Asp-52, Ser-53, Glu-63, Arg-64, Cys-67, Thr-72, Lys-74, Ala-75, and Lys-84 together coordinate (2R,3E)-phycoerythrobilin.

Belongs to the phycoerythrin family. In terms of assembly, heterotetramer of 2 different alpha chains and 2 identical beta chains which form 2 alpha-beta heterodimers within the heterotetramer. The two alpha-beta heterodimers are rotated to an open configuration in contrast to the closed configuration found in other cryptophyte species due to the insertion of a single amino acid, Asp-65, in a conserved region of the alpha chain. In the open form, the central chromophores are not in physical contact but are separated by a water-filled channel. In terms of processing, contains three phycoerythrobilin chromophores with binding mediated by both the alpha and beta subunits.

The protein localises to the plastid. It localises to the chloroplast thylakoid membrane. In terms of biological role, light-harvesting photosynthetic tetrapyrrole chromophore-protein from the phycobiliprotein complex. The sequence is that of Phycoerythrin alpha-2 subunit from Hemiselmis andersenii (Cryptophyte alga).